The chain runs to 509 residues: GMP synthase [glutamine-hydrolyzing] (509 aa).

Residues 4-193 enclose the Glutamine amidotransferase type-1 domain; it reads NVLILDFGSQ…LIKIAGTKAT (190 aa). The active-site Nucleophile is the C79. Catalysis depends on residues H167 and E169. The GMPS ATP-PPase domain occupies 194–384; it reads WTPGKFVDLT…LGIDKELLGR (191 aa). 221–227 is an ATP binding site; sequence SGGVDST.

Homodimer.

The enzyme catalyses XMP + L-glutamine + ATP + H2O = GMP + L-glutamate + AMP + diphosphate + 2 H(+). It participates in purine metabolism; GMP biosynthesis; GMP from XMP (L-Gln route): step 1/1. Its function is as follows. Catalyzes the synthesis of GMP from XMP. In Christiangramia forsetii (strain DSM 17595 / CGMCC 1.15422 / KT0803) (Gramella forsetii), this protein is GMP synthase [glutamine-hydrolyzing].